A 405-amino-acid chain; its full sequence is Probable tRNA sulfurtransferase (405 aa).

One can recognise a THUMP domain in the interval 60–165 (VPVAESLKQI…EEAAYLSYEN (106 aa)). Residues 183–184 (ML), 208–209 (HF), R265, G287, and Q296 each bind ATP.

It belongs to the ThiI family.

The protein localises to the cytoplasm. It catalyses the reaction [ThiI sulfur-carrier protein]-S-sulfanyl-L-cysteine + a uridine in tRNA + 2 reduced [2Fe-2S]-[ferredoxin] + ATP + H(+) = [ThiI sulfur-carrier protein]-L-cysteine + a 4-thiouridine in tRNA + 2 oxidized [2Fe-2S]-[ferredoxin] + AMP + diphosphate. The enzyme catalyses [ThiS sulfur-carrier protein]-C-terminal Gly-Gly-AMP + S-sulfanyl-L-cysteinyl-[cysteine desulfurase] + AH2 = [ThiS sulfur-carrier protein]-C-terminal-Gly-aminoethanethioate + L-cysteinyl-[cysteine desulfurase] + A + AMP + 2 H(+). Its pathway is cofactor biosynthesis; thiamine diphosphate biosynthesis. Functionally, catalyzes the ATP-dependent transfer of a sulfur to tRNA to produce 4-thiouridine in position 8 of tRNAs, which functions as a near-UV photosensor. Also catalyzes the transfer of sulfur to the sulfur carrier protein ThiS, forming ThiS-thiocarboxylate. This is a step in the synthesis of thiazole, in the thiamine biosynthesis pathway. The sulfur is donated as persulfide by IscS. The polypeptide is Probable tRNA sulfurtransferase (Streptococcus mutans serotype c (strain ATCC 700610 / UA159)).